A 26-amino-acid polypeptide reads, in one-letter code: uncharacterized protein (26 aa).

In terms of processing, phosphorylated by YfhK.

In terms of biological role, probable member of a two-component regulatory system YfhA/YfhK. This is an uncharacterized protein from Klebsiella oxytoca.